The chain runs to 253 residues: 3-deoxy-manno-octulosonate cytidylyltransferase (253 aa).

It belongs to the KdsB family.

It localises to the cytoplasm. The catalysed reaction is 3-deoxy-alpha-D-manno-oct-2-ulosonate + CTP = CMP-3-deoxy-beta-D-manno-octulosonate + diphosphate. Its pathway is nucleotide-sugar biosynthesis; CMP-3-deoxy-D-manno-octulosonate biosynthesis; CMP-3-deoxy-D-manno-octulosonate from 3-deoxy-D-manno-octulosonate and CTP: step 1/1. It functions in the pathway bacterial outer membrane biogenesis; lipopolysaccharide biosynthesis. Activates KDO (a required 8-carbon sugar) for incorporation into bacterial lipopolysaccharide in Gram-negative bacteria. The polypeptide is 3-deoxy-manno-octulosonate cytidylyltransferase (Acinetobacter baumannii (strain AYE)).